Consider the following 479-residue polypeptide: Cardiolipin synthase A (479 aa).

The next 2 membrane-spanning stretches (helical) occupy residues 8–28 and 38–58; these read FFGY…LHAL and IAWA…YLIF. 2 consecutive PLD phosphodiesterase domains span residues 218 to 245 and 392 to 419; these read VNFR…GDEY and QPGF…DNRS. Catalysis depends on residues His-223, Lys-225, Asp-230, His-397, Lys-399, and Asp-404.

It belongs to the phospholipase D family. Cardiolipin synthase subfamily. ClsA sub-subfamily.

It is found in the cell inner membrane. It catalyses the reaction 2 a 1,2-diacyl-sn-glycero-3-phospho-(1'-sn-glycerol) = a cardiolipin + glycerol. Its function is as follows. Catalyzes the reversible phosphatidyl group transfer from one phosphatidylglycerol molecule to another to form cardiolipin (CL) (diphosphatidylglycerol) and glycerol. This chain is Cardiolipin synthase A, found in Pseudomonas putida (strain ATCC 700007 / DSM 6899 / JCM 31910 / BCRC 17059 / LMG 24140 / F1).